Reading from the N-terminus, the 293-residue chain is Large ribosomal subunit protein uL18 (293 aa).

Positions 247–263 (IRANPAHEKKQPRDGLV) are enriched in basic and acidic residues. Residues 247–283 (IRANPAHEKKQPRDGLVKKRWNRAKMSLKQKRDRVKQ) form a disordered region. Basic residues predominate over residues 264 to 283 (KKRWNRAKMSLKQKRDRVKQ).

It belongs to the universal ribosomal protein uL18 family. In terms of assembly, component of the large ribosomal subunit (LSU).

The protein localises to the cytoplasm. The protein resides in the nucleus. In terms of biological role, component of the ribosome, a large ribonucleoprotein complex responsible for the synthesis of proteins in the cell. The small ribosomal subunit (SSU) binds messenger RNAs (mRNAs) and translates the encoded message by selecting cognate aminoacyl-transfer RNA (tRNA) molecules. The large subunit (LSU) contains the ribosomal catalytic site termed the peptidyl transferase center (PTC), which catalyzes the formation of peptide bonds, thereby polymerizing the amino acids delivered by tRNAs into a polypeptide chain. The nascent polypeptides leave the ribosome through a tunnel in the LSU and interact with protein factors that function in enzymatic processing, targeting, and the membrane insertion of nascent chains at the exit of the ribosomal tunnel. The polypeptide is Large ribosomal subunit protein uL18 (RPL5) (Suberites domuncula (Sponge)).